Reading from the N-terminus, the 243-residue chain is NAD-dependent protein deacylase SIR2rp3 (243 aa).

In terms of domain architecture, Deacetylase sirtuin-type spans M1–E239. NAD(+) is bound at residue G12–W31. Substrate-binding residues include Y56 and R59. Q95 to D98 serves as a coordination point for NAD(+). H113 acts as the Proton acceptor in catalysis. 2 residues coordinate Zn(2+): C121 and C141. NAD(+)-binding positions include G181–S183 and A225.

This sequence belongs to the sirtuin family. Class III subfamily. It depends on Zn(2+) as a cofactor.

It localises to the mitochondrion. It carries out the reaction N(6)-malonyl-L-lysyl-[protein] + NAD(+) + H2O = 2''-O-malonyl-ADP-D-ribose + nicotinamide + L-lysyl-[protein]. The enzyme catalyses N(6)-succinyl-L-lysyl-[protein] + NAD(+) + H2O = 2''-O-succinyl-ADP-D-ribose + nicotinamide + L-lysyl-[protein]. The catalysed reaction is N(6)-glutaryl-L-lysyl-[protein] + NAD(+) + H2O = 2''-O-glutaryl-ADP-D-ribose + nicotinamide + L-lysyl-[protein]. Functionally, NAD-dependent lysine demalonylase, desuccinylase and deglutarylase that specifically removes malonyl, succinyl and glutaryl groups on target proteins. Has weak NAD-dependent protein deacetylase activity; however this activity may not be physiologically relevant in vivo. This is NAD-dependent protein deacylase SIR2rp3 (SIR2rp3) from Leishmania major.